We begin with the raw amino-acid sequence, 248 residues long: UPF0736 protein BCB4264_A1231 (248 aa).

The protein belongs to the UPF0736 family.

The protein is UPF0736 protein BCB4264_A1231 of Bacillus cereus (strain B4264).